The sequence spans 313 residues: MHVIDSHTGGEPTRVILSGGPHLGSGPLSERAARLARESRAFYRSVMLEPRGQPAMVGALLVEPVDPDCITGVIFFDAEAVLGMCGHGTIGLTVTLAHMGRIRAGTHKIETPVGIVEVCLSDANTVTITNIESRRVHRARQVDVDGFGPVTGDVAYGGNWFFIVDPSPIPIERTNIRALSDAALAIRTAVIANGIGGEEGQPIDHVIFYEMSPRSAVHSRSFVFCPDGTYDRSPCGTGSSARLACLAAEGLLNAGEEIIQESVIGSTYRLSYQPGPNGGVIPKITGQAHVMAESTLHFHTDDPYRNGICHAPQ.

Residues 1 to 23 (MHVIDSHTGGEPTRVILSGGPHL) are disordered. C85 (proton acceptor) is an active-site residue. Substrate-binding positions include 86-87 (GH), H205, and D231. C235 acts as the Proton donor in catalysis. 236 to 237 (GT) is a binding site for substrate.

This sequence belongs to the proline racemase family.

The catalysed reaction is trans-4-hydroxy-L-proline = cis-4-hydroxy-D-proline. Its function is as follows. Catalyzes the epimerization of trans-4-hydroxy-L-proline (t4LHyp) to cis-4-hydroxy-D-proline (c4DHyp). Is likely involved in a degradation pathway that converts t4LHyp to alpha-ketoglutarate. Displays no proline racemase activity. The polypeptide is 4-hydroxyproline 2-epimerase (Ruegeria pomeroyi (strain ATCC 700808 / DSM 15171 / DSS-3) (Silicibacter pomeroyi)).